The chain runs to 138 residues: Putative membrane protein insertion efficiency factor (138 aa).

The interval 71 to 138 (YDPVPGTPEA…GTPSHTRGEN (68 aa)) is disordered. Residues 81-113 (RQWRELHPETARSKNEPIHDLTDDNPRDHEPAL) show a composition bias toward basic and acidic residues. Residues 123–138 (PGSTHTGTPSHTRGEN) show a composition bias toward polar residues.

The protein belongs to the UPF0161 family.

The protein localises to the cell membrane. Functionally, could be involved in insertion of integral membrane proteins into the membrane. This Cutibacterium acnes (strain DSM 16379 / KPA171202) (Propionibacterium acnes) protein is Putative membrane protein insertion efficiency factor.